Consider the following 138-residue polypeptide: ATP synthase epsilon chain (138 aa).

This sequence belongs to the ATPase epsilon chain family. As to quaternary structure, F-type ATPases have 2 components, CF(1) - the catalytic core - and CF(0) - the membrane proton channel. CF(1) has five subunits: alpha(3), beta(3), gamma(1), delta(1), epsilon(1). CF(0) has three main subunits: a, b and c.

It is found in the cell inner membrane. Functionally, produces ATP from ADP in the presence of a proton gradient across the membrane. The polypeptide is ATP synthase epsilon chain (Cupriavidus pinatubonensis (strain JMP 134 / LMG 1197) (Cupriavidus necator (strain JMP 134))).